The sequence spans 517 residues: Probable mannosyltransferase KTR7 (517 aa).

The Cytoplasmic segment spans residues 1–23; that stretch reads MAIRLNPKVRRFLLDKCRQKRYG. The chain crosses the membrane as a helical; Signal-anchor for type II membrane protein span at residues 24–44; it reads FLFLGCIFAILYCMGTWPFFA. Positions 45–85 are stem region; sequence KDIVHDPNNLPYSLQDYSTDKDEPFFRGCTDTKLYLQNPAY. The Lumenal portion of the chain corresponds to 45-517; it reads KDIVHDPNNL…IRRENFRVIE (473 aa). Residues 86–517 are catalytic; that stretch reads SKMNASFVML…IRRENFRVIE (432 aa). N89 and N144 each carry an N-linked (GlcNAc...) asparagine glycan. Catalysis depends on E367, which acts as the Nucleophile.

The protein belongs to the glycosyltransferase 15 family.

It localises to the membrane. Its function is as follows. Possible glycosyltransferase that transfers an alpha-D-mannosyl residue from GDP-mannose into lipid-linked oligosaccharide, forming an alpha-(1-&gt;2)-D-mannosyl-D-mannose linkage. This chain is Probable mannosyltransferase KTR7 (KTR7), found in Saccharomyces cerevisiae (strain ATCC 204508 / S288c) (Baker's yeast).